We begin with the raw amino-acid sequence, 284 residues long: Putative ABC transporter ATP-binding protein tll2439 (284 aa).

In terms of domain architecture, ABC transporter spans Leu6–Thr242. Gly40 to Ser47 provides a ligand contact to ATP.

The protein belongs to the ABC transporter superfamily.

It is found in the cell inner membrane. Functionally, probably part of an ABC transporter complex. Responsible for energy coupling to the transport system. This chain is Putative ABC transporter ATP-binding protein tll2439, found in Thermosynechococcus vestitus (strain NIES-2133 / IAM M-273 / BP-1).